A 234-amino-acid chain; its full sequence is Leucyl/phenylalanyl-tRNA--protein transferase (234 aa).

It belongs to the L/F-transferase family.

It localises to the cytoplasm. It carries out the reaction N-terminal L-lysyl-[protein] + L-leucyl-tRNA(Leu) = N-terminal L-leucyl-L-lysyl-[protein] + tRNA(Leu) + H(+). It catalyses the reaction N-terminal L-arginyl-[protein] + L-leucyl-tRNA(Leu) = N-terminal L-leucyl-L-arginyl-[protein] + tRNA(Leu) + H(+). The catalysed reaction is L-phenylalanyl-tRNA(Phe) + an N-terminal L-alpha-aminoacyl-[protein] = an N-terminal L-phenylalanyl-L-alpha-aminoacyl-[protein] + tRNA(Phe). Functionally, functions in the N-end rule pathway of protein degradation where it conjugates Leu, Phe and, less efficiently, Met from aminoacyl-tRNAs to the N-termini of proteins containing an N-terminal arginine or lysine. This chain is Leucyl/phenylalanyl-tRNA--protein transferase, found in Shigella sonnei (strain Ss046).